A 481-amino-acid polypeptide reads, in one-letter code: UDP-glycosyltransferase 88F4 (481 aa).

UDP-alpha-D-glucose contacts are provided by residues Ser-288, 357-358, 375-383, and 397-400; these read WA, HCGWNSVLE, and YAEQ.

It belongs to the UDP-glycosyltransferase family.

Functionally, glycosyltransferase that may possess chalcone and dihydrochalcone 2'-O-glucosyltransferase activity. This Malus domestica (Apple) protein is UDP-glycosyltransferase 88F4.